A 93-amino-acid chain; its full sequence is Small ribosomal subunit protein uS15 (93 aa).

It belongs to the universal ribosomal protein uS15 family. In terms of assembly, part of the 30S ribosomal subunit. Forms a bridge to the 50S subunit in the 70S ribosome, contacting the 23S rRNA.

One of the primary rRNA binding proteins, it binds directly to 16S rRNA where it helps nucleate assembly of the platform of the 30S subunit by binding and bridging several RNA helices of the 16S rRNA. Its function is as follows. Forms an intersubunit bridge (bridge B4) with the 23S rRNA of the 50S subunit in the ribosome. The sequence is that of Small ribosomal subunit protein uS15 from Anaplasma marginale (strain St. Maries).